The following is a 132-amino-acid chain: Inclusion membrane protein E (132 aa).

2 helical membrane-spanning segments follow: residues 41–61 (LGVVCSIICLALGIAAAAVGV) and 66–86 (FALGLGIIAILLGIVLFATSA).

The protein localises to the secreted. Its subcellular location is the host vacuole. It is found in the host pathogen-containing vacuole. The protein resides in the host pathogen-containing vacuole membrane. Its function is as follows. Inclusion membrane protein probably involved in early modification events of the chlamydial inclusion. The sequence is that of Inclusion membrane protein E from Chlamydia trachomatis serovar L2 (strain ATCC VR-902B / DSM 19102 / 434/Bu).